A 112-amino-acid chain; its full sequence is MNKTKSEHIKQQALDLFTRLQFLLQKHDTIEPYQYVLDILETGISKTKHNQQTPERQARVVYNKIASQALVDKLHFTAEENKVLAAINELAHSQKGWGEFNMLDTTNTWPSQ.

Functionally, imparts immunity to pediocin PA-1/ACH to naturally sensitive host strains. This chain is Pediocin PA-1 immunity protein (pedB), found in Pediococcus acidilactici.